Reading from the N-terminus, the 495-residue chain is Rho GTPase-activating protein 19 (495 aa).

The Rho-GAP domain occupies 98 to 304 (MSLKRKEKGV…FMIKHSQKLF (207 aa)). Disordered stretches follow at residues 327–362 (KDDL…ETQQ) and 393–495 (KHPS…SSSL). Basic and acidic residues-rich tracts occupy residues 350-362 (SRLD…ETQQ), 433-452 (QERK…KENV), and 470-481 (KSLEGQKEESCR).

GTPase activator for the Rho-type GTPases by converting them to an inactive GDP-bound state. In Gallus gallus (Chicken), this protein is Rho GTPase-activating protein 19 (ARHGAP19).